Reading from the N-terminus, the 248-residue chain is DNA repair protein RecO (248 aa).

The protein belongs to the RecO family.

Involved in DNA repair and RecF pathway recombination. The protein is DNA repair protein RecO of Chelativorans sp. (strain BNC1).